A 1526-amino-acid chain; its full sequence is Myosin type-2 heavy chain 1 (1526 aa).

Residues 22 to 73 (DDKRWVWISDPETAFTKAWIKEDLPDKKYVVRYNNSRDEKIVGEDEIDPVNP) enclose the Myosin N-terminal SH3-like domain. Residues 77-755 (DRVNDMAELT…VLAELEERRV (679 aa)) enclose the Myosin motor domain. ATP is bound at residue 170–177 (GESGAGKT). 2 actin-binding regions span residues 634–656 (LNQLMNQFNSTQPHFIRCIVPNE) and 734–748 (RIGVSKIFFKAGVLA). One can recognise an IQ domain in the interval 758–787 (LQRLMTMLQTRIRGFLQRKIFQKRLKDIQA). Positions 875–1244 (ALDKEEILRR…SLTKQVNELS (370 aa)) form a coiled coil. The residue at position 1044 (serine 1044) is a Phosphoserine.

This sequence belongs to the TRAFAC class myosin-kinesin ATPase superfamily. Myosin family. As to quaternary structure, binds to cdc4 and rlc1.

Functionally, required for cell division. It is a component of the cdc12 'spot', a structure thought to mark the site of septation. May work in conjunction with myo3. This chain is Myosin type-2 heavy chain 1 (myo2), found in Schizosaccharomyces pombe (strain 972 / ATCC 24843) (Fission yeast).